Here is a 291-residue protein sequence, read N- to C-terminus: Small ribosomal subunit biogenesis GTPase RsgA (291 aa).

Positions 63–221 (KNELKRPPVS…IADTPGFSAL (159 aa)) constitute a CP-type G domain. GTP is bound by residues 112-115 (TKKD) and 164-172 (GQSGVGKST). Positions 245, 250, 252, and 258 each coordinate Zn(2+).

This sequence belongs to the TRAFAC class YlqF/YawG GTPase family. RsgA subfamily. In terms of assembly, monomer. Associates with 30S ribosomal subunit, binds 16S rRNA. The cofactor is Zn(2+).

The protein localises to the cytoplasm. Its function is as follows. One of several proteins that assist in the late maturation steps of the functional core of the 30S ribosomal subunit. Helps release RbfA from mature subunits. May play a role in the assembly of ribosomal proteins into the subunit. Circularly permuted GTPase that catalyzes slow GTP hydrolysis, GTPase activity is stimulated by the 30S ribosomal subunit. The chain is Small ribosomal subunit biogenesis GTPase RsgA from Staphylococcus aureus (strain MRSA252).